Reading from the N-terminus, the 147-residue chain is uncharacterized protein (147 aa).

Residues 72–81 are compositionally biased toward low complexity; sequence ARAKPASRAP. Residues 72 to 147 are disordered; it reads ARAKPASRAP…QGAAGRRLSP (76 aa).

This is an uncharacterized protein from Homo sapiens (Human).